The chain runs to 1726 residues: Transcription elongation factor SPT6 (1726 aa).

Composition is skewed to acidic residues over residues 1-14 (MSDFVESEAEESEE), 32-49 (EEEDDDEEEEEENLDDQD), and 59-80 (NDDDDEEEGEEDEGSDSGDSED). The disordered stretch occupies residues 1-197 (MSDFVESEAE…DDGQPLKKPK (197 aa)). Ser-2 bears the N-acetylserine mark. The tract at residues 2 to 485 (SDFVESEAEE…PKMQNAAKAS (484 aa)) is interaction with IWS1. The interval 2–916 (SDFVESEAEE…PPVLRQAVSL (915 aa)) is interaction with PAAF1. Residues 3 to 51 (DFVESEAEESEEEYNHEGEVVPRVTKKFVEEEDDDEEEEEENLDDQDER) are a coiled coil. 2 positions are modified to phosphoserine: Ser-7 and Ser-12. Residues Ser-73, Ser-78, and Ser-91 each carry the phosphoserine modification. The segment covering 95–105 (RLEDDDFDLIE) has biased composition (acidic residues). Residues 111 to 122 (KVKRGQKYRRVK) are compositionally biased toward basic residues. Residue Ser-125 is modified to Phosphoserine. Composition is skewed to acidic residues over residues 126 to 136 (DDDEDDEEEYG), 150 to 160 (FQDEEGEEGQE), and 169 to 190 (PDEEEEDDEESDIDDFIVDDDG). Ser-267 carries the post-translational modification Phosphoserine. The segment at 317-1300 (ADWIYRNAFA…NEWKLPKDTY (984 aa)) is interaction with KDM6A. The segment at 489-520 (LKRIKEDGDEEGEGEEAEDEEQRGPELKQASR) is disordered. Positions 495 to 509 (DGDEEGEGEEAEDEE) are enriched in acidic residues. The segment covering 510 to 520 (QRGPELKQASR) has biased composition (basic and acidic residues). Lys-743 carries the N6-acetyllysine modification. Positions 1213–1282 (WNHFDSGSCP…EKFSADLTCR (70 aa)) constitute an S1 motif domain. The 107-residue stretch at 1325–1431 (YIKRVIAHPS…FARDLLNHKY (107 aa)) folds into the SH2 domain. Residue Tyr-1515 is modified to Phosphotyrosine. Thr-1523 carries the post-translational modification Phosphothreonine. Position 1526 is a phosphoserine (Ser-1526). 2 positions are modified to phosphothreonine: Thr-1530 and Thr-1532. Phosphoserine is present on Ser-1535. Thr-1539 bears the Phosphothreonine mark. The interval 1633–1726 (PQYHQLQAST…ATPLLDEMDR (94 aa)) is interaction with histone H2B and H3. A disordered region spans residues 1636–1726 (HQLQASTTPQ…ATPLLDEMDR (91 aa)). The span at 1639–1664 (QASTTPQSTQAQPQPSSSSRQRQQQP) shows a compositional bias: low complexity. Position 1676 is an N6-acetyllysine (Lys-1676). A Phosphothreonine modification is found at Thr-1697. Phosphoserine is present on residues Ser-1701 and Ser-1703. Phosphothreonine is present on residues Thr-1709 and Thr-1718.

The protein belongs to the SPT6 family. Interacts with RNA polymerase II and the DRB sensitivity-inducing factor complex (DSIF complex), which is composed of SUPT5H and SUPT4H1 or SUPT4H2. Interacts with PAAF1. Interacts with histone H2B and H3. Interacts (via SH2 domain) with POLR2A phosphorylated at 'Ser-2'. Interacts (via SH2 domain) with SETD1A. Interacts with IWS1, KDM6A and AICDA. Interacts with WDR43. In terms of processing, dephosphorylated at Ser-1530 by the PNUTS-PP1 complex during RNA polymerase II transcription pause-release. As to expression, ubiquitously expressed.

It localises to the nucleus. Its function is as follows. Histone H3-H4 chaperone that plays a key role in the regulation of transcription elongation and mRNA processing. Enhances the transcription elongation by RNA polymerase II (RNAPII) and is also required for the efficient activation of transcriptional elongation by the HIV-1 nuclear transcriptional activator, Tat. Besides chaperoning histones in transcription, acts to transport and splice mRNA by forming a complex with IWS1 and the C-terminal domain (CTD) of the RNAPII subunit RPB1 (POLR2A). The SUPT6H:IWS1:CTD complex recruits mRNA export factors (ALYREF/THOC4, EXOSC10) as well as histone modifying enzymes (such as SETD2), to ensure proper mRNA splicing, efficient mRNA export and elongation-coupled H3K36 methylation, a signature chromatin mark of active transcription. SUPT6H via its association with SETD1A, regulates both class-switch recombination and somatic hypermutation through formation of H3K4me3 epigenetic marks on activation-induced cytidine deaminase (AICDA) target loci. Promotes the activation of the myogenic gene program by entailing erasure of the repressive H3K27me3 epigenetic mark through stabilization of the chromatin interaction of the H3K27 demethylase KDM6A. The sequence is that of Transcription elongation factor SPT6 (Supt6h) from Mus musculus (Mouse).